The sequence spans 157 residues: Small ribosomal subunit protein uS7 (157 aa).

The protein belongs to the universal ribosomal protein uS7 family. In terms of assembly, part of the 30S ribosomal subunit. Contacts proteins S9 and S11.

Functionally, one of the primary rRNA binding proteins, it binds directly to 16S rRNA where it nucleates assembly of the head domain of the 30S subunit. Is located at the subunit interface close to the decoding center, probably blocks exit of the E-site tRNA. The polypeptide is Small ribosomal subunit protein uS7 (Chlamydia caviae (strain ATCC VR-813 / DSM 19441 / 03DC25 / GPIC) (Chlamydophila caviae)).